The chain runs to 260 residues: Cytochrome c oxidase subunit 3 (260 aa).

6 consecutive transmembrane segments (helical) span residues 30–50 (LILWFHINSTILFILGTVLLV), 81–101 (GMILFITSEVCLFFAFFWAFF), 126–146 (FLVPLLNTAVLLSSGVTVTWA), 158–178 (AIQSLTLTVFLGVYFTILQAW), 196–216 (FFVATGFHGLHVLIGTAFLAV), and 239–259 (WYWHFVDVVWLFLYICIYWWG).

This sequence belongs to the cytochrome c oxidase subunit 3 family. In terms of assembly, component of the cytochrome c oxidase (complex IV, CIV), a multisubunit enzyme composed of a catalytic core of 3 subunits and several supernumerary subunits. The complex exists as a monomer or a dimer and forms supercomplexes (SCs) in the inner mitochondrial membrane with ubiquinol-cytochrome c oxidoreductase (cytochrome b-c1 complex, complex III, CIII).

The protein resides in the mitochondrion inner membrane. The enzyme catalyses 4 Fe(II)-[cytochrome c] + O2 + 8 H(+)(in) = 4 Fe(III)-[cytochrome c] + 2 H2O + 4 H(+)(out). Functionally, component of the cytochrome c oxidase, the last enzyme in the mitochondrial electron transport chain which drives oxidative phosphorylation. The respiratory chain contains 3 multisubunit complexes succinate dehydrogenase (complex II, CII), ubiquinol-cytochrome c oxidoreductase (cytochrome b-c1 complex, complex III, CIII) and cytochrome c oxidase (complex IV, CIV), that cooperate to transfer electrons derived from NADH and succinate to molecular oxygen, creating an electrochemical gradient over the inner membrane that drives transmembrane transport and the ATP synthase. Cytochrome c oxidase is the component of the respiratory chain that catalyzes the reduction of oxygen to water. Electrons originating from reduced cytochrome c in the intermembrane space (IMS) are transferred via the dinuclear copper A center (CU(A)) of subunit 2 and heme A of subunit 1 to the active site in subunit 1, a binuclear center (BNC) formed by heme A3 and copper B (CU(B)). The BNC reduces molecular oxygen to 2 water molecules using 4 electrons from cytochrome c in the IMS and 4 protons from the mitochondrial matrix. The chain is Cytochrome c oxidase subunit 3 (COIII) from Pisaster ochraceus (Ochre sea star).